A 189-amino-acid chain; its full sequence is Elongation factor P (189 aa).

At Lys-34 the chain carries N6-(3,6-diaminohexanoyl)-5-hydroxylysine.

Belongs to the elongation factor P family. In terms of processing, may be beta-lysylated on the epsilon-amino group of Lys-34 by the combined action of EpmA and EpmB, and then hydroxylated on the C5 position of the same residue by EpmC (if this protein is present). Lysylation is critical for the stimulatory effect of EF-P on peptide-bond formation. The lysylation moiety may extend toward the peptidyltransferase center and stabilize the terminal 3-CCA end of the tRNA. Hydroxylation of the C5 position on Lys-34 may allow additional potential stabilizing hydrogen-bond interactions with the P-tRNA.

The protein localises to the cytoplasm. It functions in the pathway protein biosynthesis; polypeptide chain elongation. Functionally, involved in peptide bond synthesis. Alleviates ribosome stalling that occurs when 3 or more consecutive Pro residues or the sequence PPG is present in a protein, possibly by augmenting the peptidyl transferase activity of the ribosome. Modification of Lys-34 is required for alleviation. The polypeptide is Elongation factor P (Alkalilimnicola ehrlichii (strain ATCC BAA-1101 / DSM 17681 / MLHE-1)).